The following is a 250-amino-acid chain: 5-oxoprolinase subunit A (250 aa).

The protein belongs to the LamB/PxpA family. In terms of assembly, forms a complex composed of PxpA, PxpB and PxpC.

It catalyses the reaction 5-oxo-L-proline + ATP + 2 H2O = L-glutamate + ADP + phosphate + H(+). Its function is as follows. Catalyzes the cleavage of 5-oxoproline to form L-glutamate coupled to the hydrolysis of ATP to ADP and inorganic phosphate. The chain is 5-oxoprolinase subunit A from Staphylococcus aureus (strain MRSA252).